A 118-amino-acid chain; its full sequence is Large ribosomal subunit protein bL19 (118 aa).

This sequence belongs to the bacterial ribosomal protein bL19 family.

In terms of biological role, this protein is located at the 30S-50S ribosomal subunit interface and may play a role in the structure and function of the aminoacyl-tRNA binding site. In Citrifermentans bemidjiense (strain ATCC BAA-1014 / DSM 16622 / JCM 12645 / Bem) (Geobacter bemidjiensis), this protein is Large ribosomal subunit protein bL19.